The chain runs to 139 residues: Antitoxin HicB 2 (139 aa).

Residues 87–137 (MLQTRTSNAELARLLGTRPQEIQRIVSLSHSTKIDTIANALNALGKHLELV) enclose the HTH cro/C1-type domain. Positions 96 to 113 (ELARLLGTRPQEIQRIVS) form a DNA-binding region, H-T-H motif.

The protein belongs to the HicB antitoxin family. As to quaternary structure, probably forms a complex with the probable mRNA interferase HicA2 (its cognate toxin); when complexed with HicA inhibits the toxin activity.

Functionally, antitoxin component of a type II toxin-antitoxin (TA) system. Functions as an mRNA interferase antitoxin preventing effects of the HicA 2 toxin. This is Antitoxin HicB 2 (hicB2) from Photorhabdus laumondii subsp. laumondii (strain DSM 15139 / CIP 105565 / TT01) (Photorhabdus luminescens subsp. laumondii).